Here is a 423-residue protein sequence, read N- to C-terminus: Hemoglobinase (423 aa).

Residues 1–18 (MFYSIFFIHILRIVLVDC) form the signal peptide. Residues 19 to 29 (NEYSEENVDDR) constitute a propeptide that is removed on maturation. Residues H145 and C186 contribute to the active site. The tract at residues 286-307 (RKKASTEHDEPPMKPKDSIPSR) is disordered. Positions 286 to 423 (RKKASTEHDE…INGVIRKVCG (138 aa)) are excised as a propeptide. Residues 289-305 (ASTEHDEPPMKPKDSIP) show a composition bias toward basic and acidic residues.

This sequence belongs to the peptidase C13 family. As to expression, gut.

The enzyme catalyses Hydrolysis of proteins and small molecule substrates at -Asn-|-Xaa- bonds.. Its function is as follows. This protease is used by the parasite for degradation of the host globin. The protein is Hemoglobinase (HAEM) of Schistosoma japonicum (Blood fluke).